A 365-amino-acid chain; its full sequence is tRNA 2-selenouridine synthase (365 aa).

The 124-residue stretch at 15–138 (LVSDHPIMDA…MRQFLIETID (124 aa)) folds into the Rhodanese domain. The active-site S-selanylcysteine intermediate is C98.

This sequence belongs to the SelU family. Monomer.

The catalysed reaction is 5-methylaminomethyl-2-thiouridine(34) in tRNA + selenophosphate + (2E)-geranyl diphosphate + H2O + H(+) = 5-methylaminomethyl-2-selenouridine(34) in tRNA + (2E)-thiogeraniol + phosphate + diphosphate. The enzyme catalyses 5-methylaminomethyl-2-thiouridine(34) in tRNA + (2E)-geranyl diphosphate = 5-methylaminomethyl-S-(2E)-geranyl-thiouridine(34) in tRNA + diphosphate. It catalyses the reaction 5-methylaminomethyl-S-(2E)-geranyl-thiouridine(34) in tRNA + selenophosphate + H(+) = 5-methylaminomethyl-2-(Se-phospho)selenouridine(34) in tRNA + (2E)-thiogeraniol. It carries out the reaction 5-methylaminomethyl-2-(Se-phospho)selenouridine(34) in tRNA + H2O = 5-methylaminomethyl-2-selenouridine(34) in tRNA + phosphate. Functionally, involved in the post-transcriptional modification of the uridine at the wobble position (U34) of tRNA(Lys), tRNA(Glu) and tRNA(Gln). Catalyzes the conversion of 2-thiouridine (S2U-RNA) to 2-selenouridine (Se2U-RNA). Acts in a two-step process involving geranylation of 2-thiouridine (S2U) to S-geranyl-2-thiouridine (geS2U) and subsequent selenation of the latter derivative to 2-selenouridine (Se2U) in the tRNA chain. The protein is tRNA 2-selenouridine synthase of Shewanella piezotolerans (strain WP3 / JCM 13877).